We begin with the raw amino-acid sequence, 244 residues long: Phosphoadenosine 5'-phosphosulfate reductase (244 aa).

The Nucleophile; cysteine thiosulfonate intermediate role is filled by Cys-239.

This sequence belongs to the PAPS reductase family. CysH subfamily.

The protein localises to the cytoplasm. It catalyses the reaction [thioredoxin]-disulfide + sulfite + adenosine 3',5'-bisphosphate + 2 H(+) = [thioredoxin]-dithiol + 3'-phosphoadenylyl sulfate. Its pathway is sulfur metabolism; hydrogen sulfide biosynthesis; sulfite from sulfate: step 3/3. Its function is as follows. Catalyzes the formation of sulfite from phosphoadenosine 5'-phosphosulfate (PAPS) using thioredoxin as an electron donor. The chain is Phosphoadenosine 5'-phosphosulfate reductase from Salmonella newport (strain SL254).